Reading from the N-terminus, the 767-residue chain is U3 small nucleolar RNA-associated protein 14 homolog A (767 aa).

The segment at 23–49 is disordered; that stretch reads TSNYPLSASEDEGDSDGERKHQKLLEA. Phosphoserine is present on residues Ser29, Ser31, Ser37, Ser52, Ser77, and Ser81. A Glycyl lysine isopeptide (Lys-Gly) (interchain with G-Cter in SUMO2) cross-link involves residue Lys122. Position 205 is a phosphothreonine (Thr205). Residues 317–346 adopt a coiled-coil conformation; the sequence is LEARQAMQEQLAKNKELTQKLQVVSESEEE. Residues 338–554 form a disordered region; that stretch reads QVVSESEEEG…SKGKNKKEQM (217 aa). The segment covering 342-355 has biased composition (acidic residues); that stretch reads ESEEEGGADEEEAL. The span at 398–433 shows a compositional bias: basic and acidic residues; it reads AAHEFPENEENDKPVAEEDELLKELEKRRSLRKRSE. Arg431 bears the Citrulline mark. A Glycyl lysine isopeptide (Lys-Gly) (interchain with G-Cter in SUMO2) cross-link involves residue Lys447. Ser451 carries the phosphoserine modification. Over residues 486–498 the composition is skewed to acidic residues; the sequence is VWEEEPAPEEDEP. Residues 503 to 538 are compositionally biased toward basic and acidic residues; sequence RPERMRTLEELEELGKEDSLPNKERPRPSVEGEQVR. A Glycyl lysine isopeptide (Lys-Gly) (interchain with G-Cter in SUMO2) cross-link involves residue Lys518. Position 586 is a citrulline (Arg586). The segment at 730–767 is disordered; sequence TAEDVDCRSSPRSDVPVMQSNPKQHSKHQKQRKKSSIG. A compositionally biased stretch (basic residues) spans 753–767; it reads QHSKHQKQRKKSSIG.

Belongs to the UTP14 family. As to quaternary structure, interacts with DHX37. Citrullinated by PADI4. Ubiquitously expressed.

The protein resides in the nucleus. The protein localises to the nucleolus. May be required for ribosome biogenesis. The protein is U3 small nucleolar RNA-associated protein 14 homolog A (Utp14a) of Mus musculus (Mouse).